Consider the following 305-residue polypeptide: Peroxidase A2 (305 aa).

Position 1 is a pyrrolidone carboxylic acid (Q1). N3 and N13 each carry an N-linked (GlcNAc...) asparagine glycan. Cystine bridges form between C11/C91, C44/C49, C97/C299, and C176/C208. The active-site Proton acceptor is the H42. 5 residues coordinate Ca(2+): D43, V46, G48, D50, and S52. P139 serves as a coordination point for substrate. N147 carries an N-linked (GlcNAc...) asparagine glycan. H169 is a binding site for heme b. T170 contacts Ca(2+). 3 N-linked (GlcNAc...) asparagine glycosylation sites follow: N185, N197, and N211. Ca(2+) contacts are provided by D221, T224, and D229. A glycan (N-linked (GlcNAc...) asparagine) is linked at N267.

This sequence belongs to the peroxidase family. Classical plant (class III) peroxidase subfamily. The cofactor is Ca(2+). Requires heme b as cofactor.

It carries out the reaction 2 a phenolic donor + H2O2 = 2 a phenolic radical donor + 2 H2O. Removal of H(2)O(2), oxidation of toxic reductants, biosynthesis and degradation of lignin, suberization, auxin catabolism, response to environmental stresses such as wounding, pathogen attack and oxidative stress. These functions might be dependent on each isozyme/isoform in each plant tissue. This chain is Peroxidase A2 (HRPA2), found in Armoracia rusticana (Horseradish).